A 201-amino-acid chain; its full sequence is Ribosome maturation factor RimM (201 aa).

The PRC barrel domain occupies 94–168 (EDEYYHADLI…RLVADPPLGL (75 aa)). The interval 164-201 (PPLGLLDDTRPPAGVEGEVEEDPGVGIDEDGDGKGGAS) is disordered. Over residues 180 to 194 (GEVEEDPGVGIDEDG) the composition is skewed to acidic residues.

It belongs to the RimM family. Binds ribosomal protein uS19.

It localises to the cytoplasm. An accessory protein needed during the final step in the assembly of 30S ribosomal subunit, possibly for assembly of the head region. Essential for efficient processing of 16S rRNA. May be needed both before and after RbfA during the maturation of 16S rRNA. It has affinity for free ribosomal 30S subunits but not for 70S ribosomes. The chain is Ribosome maturation factor RimM from Rhodospirillum rubrum (strain ATCC 11170 / ATH 1.1.1 / DSM 467 / LMG 4362 / NCIMB 8255 / S1).